Consider the following 398-residue polypeptide: Calcium-binding and coiled-coil domain-containing protein 2 (398 aa).

The CLIR motif lies at I133–V136. Residues T137 to M301 are a coiled coil. The LIR-like signature appears at D203–E206. A disordered region spans residues T314–P341. The segment at N323–S333 is interaction with LGALS8. The interaction with MYO6 stretch occupies residues K347–L398. Residues C371–H396 form a UBZ1-type zinc finger. Zn(2+) is bound by residues C374, C377, H392, and H396. A Phosphoserine modification is found at S397.

The protein belongs to the CALCOCO family. In terms of assembly, dimer. Part of a complex consisting of CALCOCO2, TAX1BP1 and MYO6. Interacts with MYO6. Interacts with GEMIN4. Interacts with ATG8 family members MAP1LC3A, MAP1LC3B, GABARAP, GABARAPL1 and GABARAPL2. Interacts with ATG8 family member MAP1LC3C. Interacts with LGALS8. Interacts with TOM1; the interaction is indirect and is mediated by MYO6, which acts as a bridge between TOM1 and CALCOCO2. Interacts with AZI2.

The protein localises to the cytoplasm. It localises to the perinuclear region. Its subcellular location is the cytoskeleton. It is found in the cytoplasmic vesicle. The protein resides in the autophagosome membrane. Xenophagy-specific receptor required for autophagy-mediated intracellular bacteria degradation. Acts as an effector protein of galectin-sensed membrane damage that restricts the proliferation of infecting pathogens upon entry into the cytosol by targeting LGALS8-associated bacteria for autophagy. Initially orchestrates bacteria targeting to autophagosomes and subsequently ensures pathogen degradation by regulating pathogen-containing autophagosome maturation. Bacteria targeting to autophagosomes relies on its interaction with MAP1LC3A, MAP1LC3B and/or GABARAPL2, whereas regulation of pathogen-containing autophagosome maturation requires the interaction with MAP3LC3C. May play a role in ruffle formation and actin cytoskeleton organization and seems to negatively regulate constitutive secretion. This Macaca fascicularis (Crab-eating macaque) protein is Calcium-binding and coiled-coil domain-containing protein 2.